Here is a 362-residue protein sequence, read N- to C-terminus: Protein ABHD12B (362 aa).

It belongs to the serine esterase family.

This Homo sapiens (Human) protein is Protein ABHD12B.